Consider the following 146-residue polypeptide: Large ribosomal subunit protein uL15 (146 aa).

Basic and acidic residues predominate over residues 1–13 (MKLHELKAAEGSR). A disordered region spans residues 1-56 (MKLHELKAAEGSRRVRNRVGRGAGSGNGKTSGRGQKGQKARSGGGVRPGFEGGQLP). Composition is skewed to gly residues over residues 21–35 (RGAG…GRGQ) and 42–52 (SGGGVRPGFEG).

Belongs to the universal ribosomal protein uL15 family. Part of the 50S ribosomal subunit.

Binds to the 23S rRNA. This is Large ribosomal subunit protein uL15 from Staphylococcus haemolyticus (strain JCSC1435).